The following is a 271-amino-acid chain: Transcription factor PU.1 (271 aa).

A disordered region spans residues Leu124–Glu164. Residues Ser141 and Ser147 each carry the phosphoserine modification. Positions Leu154 to Glu164 are enriched in low complexity. The segment at residues Ile171–Ser254 is a DNA-binding region (ETS). DNA-binding residues include Lys218, Arg231, Arg234, and Lys244.

This sequence belongs to the ETS family. In terms of assembly, binds DNA as a monomer. Can form homomers. Directly interacts with CEBPD/NF-IL6-beta; this interaction does not affect DNA-binding properties of each partner. Interacts with NONO/p54(nrb). Interacts with RUNX1/AML1. Interacts with GFI1; the interaction represses SPI1 transcriptional activity, hence blocks SPI1-induced macrophage differentiation of myeloid progenitor cells. Interacts with CEBPE. Interacts with IRF4/Pip and IRF8. Interacts with JUN. Interacts with RB1. Interacts with TBP.

The protein resides in the nucleus. Its activity is regulated as follows. Transcriptional activity at macrophage-specific genes is inhibited by interaction with GFI1, which results in the inhibition of SPI1-induced macrophage differentiation of myeloid progenitor cells, but not that of the granulocyte lineage. In terms of biological role, pioneer transcription factor, which controls hematopoietic cell fate by decompacting stem cell heterochromatin and allowing other transcription factors to enter otherwise inaccessible genomic sites. Once in open chromatin, can directly control gene expression by binding genetic regulatory elements and can also more broadly influence transcription by recruiting transcription factors, such as interferon regulatory factors (IRFs), to otherwise inaccessible genomic regions. Transcriptionally activates genes important for myeloid and lymphoid lineages, such as CSF1R or FCER1A. Transcriptional activation from certain promoters, possibly containing low affinity binding sites, is achieved cooperatively with other transcription factors. FCER1A transactivation is achieved in cooperation with GATA1. May be particularly important for the pro- to pre-B cell transition. Binds (via the ETS domain) onto the purine-rich DNA core sequence 5'-GAGGAA-3', also known as the PU-box. In vitro can bind RNA and interfere with pre-mRNA splicing. The chain is Transcription factor PU.1 (Spi1) from Rattus norvegicus (Rat).